A 182-amino-acid polypeptide reads, in one-letter code: Ribosome-recycling factor (182 aa).

It belongs to the RRF family.

Its subcellular location is the cytoplasm. In terms of biological role, responsible for the release of ribosomes from messenger RNA at the termination of protein biosynthesis. May increase the efficiency of translation by recycling ribosomes from one round of translation to another. The polypeptide is Ribosome-recycling factor (Gloeobacter violaceus (strain ATCC 29082 / PCC 7421)).